We begin with the raw amino-acid sequence, 363 residues long: Mitogen-activated protein kinase kinase 2 (363 aa).

A Phosphoserine modification is found at serine 56. The region spanning 70–330 (LDMVKVIGKG…AKELMEHPFL (261 aa)) is the Protein kinase domain. Residues 76-84 (IGKGSSGVV) and lysine 99 contribute to the ATP site. Aspartate 192 acts as the Proton acceptor in catalysis. Phosphothreonine is present on residues threonine 220, threonine 226, and threonine 230.

It belongs to the protein kinase superfamily. STE Ser/Thr protein kinase family. MAP kinase kinase subfamily. As to quaternary structure, interacts with MEKK1, MPK4 and MPK6. May form a ternary complex composed of MEKK1 and MKK1/MKK2 and MPK4. Interacts with MPK10 and MPK11. Interacts with MAPKKK5 mainly in the cytosol. Post-translationally, phosphorylation at Thr-220 and Thr-226 by MAP kinase kinase kinases positively regulates kinase activity. Phosphorylated by MEKK1 in response to cold. Phosphorylated by MAPKKK5.

The enzyme catalyses L-seryl-[protein] + ATP = O-phospho-L-seryl-[protein] + ADP + H(+). It catalyses the reaction L-threonyl-[protein] + ATP = O-phospho-L-threonyl-[protein] + ADP + H(+). It carries out the reaction L-tyrosyl-[protein] + ATP = O-phospho-L-tyrosyl-[protein] + ADP + H(+). With respect to regulation, activated in response to cold and salt stresses through serine and threonine phosphorylation by MEKK1. MEKK1, MKK1/MKK2 and MPK4 function in a signaling pathway that modulates the expression of genes responding to biotic and abiotic stresses and also plays an important role in pathogen defense by negatively regulating innate immunity. Plays a role in abiotic stress tolerance and plant disease resistance through activation of MPK4 and MPK6 by phosphorylation. Acts redundantly with MKK1. This chain is Mitogen-activated protein kinase kinase 2 (MKK2), found in Arabidopsis thaliana (Mouse-ear cress).